Here is a 124-residue protein sequence, read N- to C-terminus: MSSSSSSEDELEKKVTKEQKKKETKSKKRQSEAVEEEKQEVKKAKNEEEVSGRLKDSDGNEMFEIGNLRYATVSKFKGKEYVNIREYYIDRDSQKMMPSRKGISLSKAQWANLKDLIPEIDKKF.

Positions 1 to 61 (MSSSSSSEDE…GRLKDSDGNE (61 aa)) are disordered. 2 stretches are compositionally biased toward basic and acidic residues: residues 11 to 21 (LEKKVTKEQKK) and 39 to 58 (QEVKKAKNEEEVSGRLKDSD).

This sequence belongs to the transcriptional coactivator PC4 family.

It is found in the nucleus. Its function is as follows. General coactivator that functions cooperatively with TAFs and mediates functional interactions between upstream activators and the general transcriptional machinery. Binds single-stranded DNA. In Caenorhabditis elegans, this protein is Putative RNA polymerase II transcriptional coactivator.